Consider the following 201-residue polypeptide: Small ribosomal subunit protein uS4 (201 aa).

The 61-residue stretch at 91–151 (SRLDNVVYRA…EKSRKMVWFD (61 aa)) folds into the S4 RNA-binding domain.

The protein belongs to the universal ribosomal protein uS4 family. As to quaternary structure, part of the 30S ribosomal subunit. Contacts protein S5. The interaction surface between S4 and S5 is involved in control of translational fidelity.

Its function is as follows. One of the primary rRNA binding proteins, it binds directly to 16S rRNA where it nucleates assembly of the body of the 30S subunit. In terms of biological role, with S5 and S12 plays an important role in translational accuracy. The polypeptide is Small ribosomal subunit protein uS4 (Corynebacterium kroppenstedtii (strain DSM 44385 / JCM 11950 / CIP 105744 / CCUG 35717)).